Here is a 229-residue protein sequence, read N- to C-terminus: Small ribosomal subunit protein uS3 (229 aa).

The 69-residue stretch at 39–107 (VRKFLEKKLK…PAQINIAEIR (69 aa)) folds into the KH type-2 domain.

It belongs to the universal ribosomal protein uS3 family. Part of the 30S ribosomal subunit. Forms a tight complex with proteins S10 and S14.

Functionally, binds the lower part of the 30S subunit head. Binds mRNA in the 70S ribosome, positioning it for translation. This is Small ribosomal subunit protein uS3 from Shewanella loihica (strain ATCC BAA-1088 / PV-4).